A 109-amino-acid chain; its full sequence is Parvalbumin, muscle (109 aa).

A1 carries the post-translational modification N-acetylalanine. 2 EF-hand domains span residues 38–73 and 77–109; these read KSPE…FTPD and LSDK…VAES. Ca(2+)-binding residues include D51, D53, S55, E62, D90, D92, D94, K96, and E101.

This sequence belongs to the parvalbumin family.

In muscle, parvalbumin is thought to be involved in relaxation after contraction. It binds two calcium ions. The chain is Parvalbumin, muscle from Gallus gallus (Chicken).